Consider the following 150-residue polypeptide: Large ribosomal subunit protein bL9 (150 aa).

Belongs to the bacterial ribosomal protein bL9 family.

Its function is as follows. Binds to the 23S rRNA. This chain is Large ribosomal subunit protein bL9, found in Janthinobacterium sp. (strain Marseille) (Minibacterium massiliensis).